The sequence spans 1075 residues: MFYGTHFIMSPPTKSKLKRQSQLLSSMLSRTLSYKYRDLDSTFSSLGASDDPAELSTQLSAPGVLKVFGDSVCTGTHYKSVLATGTSSARELVKEALERYALDPRQAGQYVLCDVVGQAGDAGQRWQARCFRVFGDSEKPLLIQELWKPREGLSRRFELRKRSDVEELAAKEVDTITAGINAQARRLQRSRAKGTPTPALGDARSSPPPRLRRTVSETSLSPVNALPAAAQGPEEPGPDAMRYSLYQSPHLLLLQGYSQQHDSLVYVLNRDRHTVGQRTPSSKPSISLSAPDILPLHCTIRRQPLPDSGQAAGRLVLEPIPGAHISVNFSEVGHRTVVLHHGDLLSLGLYYLLLFKDPAQAQPLPARALARLRAVPQSCRLCGAALGARGAASPTQAALPRRQQLLLEFEPHLEDTLLQRIMTLIEPGGDDHKLTPAFLLCLCIQHSATHFQPGTFGQLLLKIARLIRETVWEKTKELAEKQAQLQEPISLASCAMADLVPDLQPILFWMSNSIELLYFIQQKCPLYMQSMEEQLDITGSKESLFSCTLTASEEAMAVLEEVVLYAFQQCVYYVSKSLYICLPALLECPPFQTERRESWSSAPELPEELRRVVSVYQAALDLLRQLQVHPEVASQMLAYLFFFSGTLLLNQLLDRGPSLSCFHWPRGVQACARLQQLLEWMRSAGFGAAGEHFFQKLSCTLNLLATPRAQLIQMSWTALRAAFPALSPAQLHRLLTHYQLASAMGPMSTWEPGAQDSPEAFRSEDVLESYENPPPIVLPSDGFQVDLEANCLDDSIYQHLLYVRHFLWGLRSRASPGSPGRPGSGASQPVCPEGMHHVVLDGHLEAPSCPLAPRDPGPAAREVAPERTLPLRGAPWAQAPPGRQPSRGGSQAGPPHTDSSCLLTPPSTPLGPEPGDPDWPESGGPCGKALPERQRNGLSGLRGAAPEGDSAALAEESPPAPSSRSSSTEDFCYVFTVELERGPSGLGMGLIDGMHTHLGAPGLYIQTLLPGSPAAADGRLSLGDRILEVNGSSLLGLGYLRAVDLIRHGGKKMRFLVAKSDVETAKKIHFRTPPL.

The Ras-associating domain maps to alanine 61–aspartate 164. Residues glutamine 183–glycine 237 form a disordered region. 4 positions are modified to phosphoserine: serine 206, serine 216, serine 219, and serine 221. A compositionally biased stretch (low complexity) spans alanine 225–glutamate 234. One can recognise an FHA domain in the interval arginine 314–arginine 389. Serine 393 is subject to Phosphoserine. The Dilute domain occupies alanine 497–glutamate 764. A disordered region spans residues arginine 872–serine 967. Serine 890 carries the phosphoserine modification. Low complexity predominate over residues serine 950–serine 967. The region spanning threonine 976–aspartate 1061 is the PDZ domain.

It belongs to the RADIL family. As to quaternary structure, interacts with RAP1A; in a GTP-dependent manner. Does not interact with members of the Ras family. Interacts (via PDZ domain) with KIF14; is recruited to the microtubule network restricting its interaction with activated RAP1A.

In terms of biological role, downstream effector of Rap required for cell adhesion and migration of neural crest precursors during development. The chain is Ras-associating and dilute domain-containing protein (RADIL) from Homo sapiens (Human).